Reading from the N-terminus, the 564-residue chain is Chaperonin GroEL 2 (564 aa).

ATP contacts are provided by residues 29–32, 86–90, Gly413, and Asp493; these read TIGP and DGTTT. The disordered stretch occupies residues 521–541; it reads DKPEPPAPAGDGGGDPMGGMG. Positions 530-541 are enriched in gly residues; that stretch reads GDGGGDPMGGMG.

Belongs to the chaperonin (HSP60) family. Forms a cylinder of 14 subunits composed of two heptameric rings stacked back-to-back. Interacts with the co-chaperonin GroES.

The protein localises to the cytoplasm. It catalyses the reaction ATP + H2O + a folded polypeptide = ADP + phosphate + an unfolded polypeptide.. Functionally, together with its co-chaperonin GroES, plays an essential role in assisting protein folding. The GroEL-GroES system forms a nano-cage that allows encapsulation of the non-native substrate proteins and provides a physical environment optimized to promote and accelerate protein folding. The sequence is that of Chaperonin GroEL 2 from Prochlorococcus marinus (strain MIT 9303).